The chain runs to 84 residues: Small ribosomal subunit protein uS17 (84 aa).

Belongs to the universal ribosomal protein uS17 family. Part of the 30S ribosomal subunit.

Functionally, one of the primary rRNA binding proteins, it binds specifically to the 5'-end of 16S ribosomal RNA. The sequence is that of Small ribosomal subunit protein uS17 from Clostridium botulinum (strain ATCC 19397 / Type A).